A 138-amino-acid chain; its full sequence is Transcription antitermination protein NusB (138 aa).

The protein belongs to the NusB family.

In terms of biological role, involved in transcription antitermination. Required for transcription of ribosomal RNA (rRNA) genes. Binds specifically to the boxA antiterminator sequence of the ribosomal RNA (rrn) operons. This chain is Transcription antitermination protein NusB, found in Leptospira borgpetersenii serovar Hardjo-bovis (strain JB197).